The sequence spans 204 residues: Small ribosomal subunit protein eS8 (204 aa).

Belongs to the eukaryotic ribosomal protein eS8 family.

The polypeptide is Small ribosomal subunit protein eS8 (RPS8) (Griffithsia japonica (Red alga)).